Reading from the N-terminus, the 490-residue chain is Muscarinic acetylcholine receptor M4 (490 aa).

Topologically, residues 1-42 (MHNLSAQPWQAKMANLTYDNVTLSNRSEVAIQPPTNYKTVEL) are extracellular. N-linked (GlcNAc...) asparagine glycans are attached at residues Asn3, Asn15, Asn20, and Asn25. Residues 43–64 (VFIATVTGSLSLVTVVGNILVM) traverse the membrane as a helical segment. The Cytoplasmic portion of the chain corresponds to 65–78 (LSIKVNRQLQTVNN). The helical transmembrane segment at 79 to 99 (YFLFSLACADLIIGVFSMNLY) threads the bilayer. Over 100–116 (TVYIIKGYWPLGAVVCD) the chain is Extracellular. Cysteines 115 and 195 form a disulfide. The helical transmembrane segment at 117–138 (LWLALDYVVSNASVMNLLIISF) threads the bilayer. Residues 139–158 (DRYFCVTKPLTYPARRTTKM) are Cytoplasmic-facing. Residues 159–181 (AGLMIAAAWILSFILWAPAILFW) traverse the membrane as a helical segment. The Extracellular segment spans residues 182–203 (QFIVGKRTVHERECYIQFLSNP). Residues 204–226 (AVTFGTAIAAFYLPVVIMTVLYI) traverse the membrane as a helical segment. The Cytoplasmic portion of the chain corresponds to 227-412 (HISLASRSRV…AAREKKVTRT (186 aa)). Residues 236 to 250 (VRRHKPESRKERKGK) are compositionally biased toward basic residues. The segment at 236-343 (VRRHKPESRK…HPRVNPTSKW (108 aa)) is disordered. The span at 270-285 (RAVEVKEEVRNGKVDD) shows a compositional bias: basic and acidic residues. Polar residues-rich tracts occupy residues 287 to 296 (PSAQTEATGQ) and 304 to 314 (NESSTVSMTQT). Residues 413–433 (IFAILLAFILTWTPYNVMVLI) traverse the membrane as a helical segment. Topologically, residues 434–447 (NTFCETCVPETVWS) are extracellular. The helical transmembrane segment at 448–467 (IGYWLCYVNSTINPACYALC) threads the bilayer. The Cytoplasmic portion of the chain corresponds to 468-490 (NATFKKTFKHLLMCQYRNIGTAR).

The protein belongs to the G-protein coupled receptor 1 family. Muscarinic acetylcholine receptor subfamily. CHRM4 sub-subfamily. As to expression, expressed in heart and brain.

The protein resides in the cell membrane. It is found in the postsynaptic cell membrane. Functionally, the muscarinic acetylcholine receptor mediates various cellular responses, including inhibition of adenylate cyclase, breakdown of phosphoinositides and modulation of potassium channels through the action of G proteins. Primary transducing effect is inhibition of adenylate cyclase. May couple to multiple functional responses in cell lines. The protein is Muscarinic acetylcholine receptor M4 (CHRM4) of Gallus gallus (Chicken).